The sequence spans 586 residues: Succinate dehydrogenase flavoprotein subunit (586 aa).

FAD-binding positions include Gly10–Gly15 and Ser33–Gly48. His41 carries the tele-8alpha-FAD histidine modification. 2 residues coordinate substrate: His236 and Ser250. The active-site Proton acceptor is Arg285. His352 contributes to the substrate binding site. Glu376 is a binding site for FAD. Arg386 contacts substrate. Position 391-392 (Ser391–Leu392) interacts with FAD.

Belongs to the FAD-dependent oxidoreductase 2 family. FRD/SDH subfamily. In terms of assembly, in B.subtilis succinate dehydrogenase forms part of an enzyme complex containing three subunits: a flavoprotein, an iron-sulfur protein and cytochrome b-558. Interacts with FloT. The cofactor is FAD.

It localises to the cell membrane. It is found in the membrane raft. The enzyme catalyses a quinone + succinate = fumarate + a quinol. Its pathway is carbohydrate metabolism; tricarboxylic acid cycle; fumarate from succinate (bacterial route): step 1/1. The protein is Succinate dehydrogenase flavoprotein subunit (sdhA) of Bacillus subtilis (strain 168).